A 223-amino-acid polypeptide reads, in one-letter code: Serum amyloid P-component (223 aa).

Positions 1 to 19 are cleaved as a signal peptide; sequence MDKMLFWVSVFTIFLDVFA. The Pentraxin (PTX) domain maps to 24-223; it reads DKKVFVFPRE…YVIIKPRVWD (200 aa). C55 and C114 are disulfide-bonded. Residues D77, N78, E155, Q156, D157, and Q167 each coordinate Ca(2+). N-linked (GlcNAc...) asparagine glycosylation is present at N198.

Belongs to the pentraxin family. In terms of assembly, homopentamer. Pentraxin (or pentaxin) have a discoid arrangement of 5 non-covalently bound subunits. The cofactor is Ca(2+).

It localises to the secreted. The chain is Serum amyloid P-component (PTX2) from Cavia porcellus (Guinea pig).